A 131-amino-acid chain; its full sequence is Hypocretin neuropeptide precursor (131 aa).

Gln-34 carries the post-translational modification Pyrrolidone carboxylic acid. 2 disulfide bridges follow: Cys-39–Cys-45 and Cys-40–Cys-47. Leucine amide is present on Leu-66. A disordered region spans residues 104-131 (EPALRPCSGRRCPSEAASSVAPGGRSGV).

Belongs to the orexin family.

It is found in the rough endoplasmic reticulum. The protein resides in the cytoplasmic vesicle. Its subcellular location is the synapse. Functionally, neuropeptides that play a significant role in the regulation of food intake and sleep-wakefulness, possibly by coordinating the complex behavioral and physiologic responses of these complementary homeostatic functions. A broader role in the homeostatic regulation of energy metabolism, autonomic function, hormonal balance and the regulation of body fluids, is also suggested. Binds to orexin receptors HCRTR1/OX1R and HCRTR2/OX2R with a high affinity. Stimulates food intake. Modulates pituitary luteinizing hormone secretion in an ovarian steroid-dependent manner. Its function is as follows. Binds to orexin receptor HCRTR2/OX2R only. Stimulates food intake. Modulates pituitary luteinizing hormone secretion in an ovarian steroid-dependent manner. This is Hypocretin neuropeptide precursor (HCRT) from Bos taurus (Bovine).